A 100-amino-acid chain; its full sequence is Protein MEN-8 (100 aa).

Residues 1–33 (MANNMKSATFCKATWAIFLVALAILVQLKGSEA) form the signal peptide. 4 disulfides stabilise this stretch: cysteine 38–cysteine 76, cysteine 48–cysteine 65, cysteine 66–cysteine 91, and cysteine 78–cysteine 98.

It belongs to the A9/FIL1 family.

The protein localises to the secreted. This chain is Protein MEN-8 (MEN-8), found in Silene latifolia (White campion).